Reading from the N-terminus, the 476-residue chain is FAD-dependent monooxygenase ausM (476 aa).

FAD is bound by residues Glu41, Gly55, and Arg114. Tyr222 is a catalytic residue. 2 residues coordinate FAD: Asp314 and Ala327. A helical transmembrane segment spans residues 447–467; the sequence is LGSTPIHMLTLLLPCLFYFMY.

The protein belongs to the paxM FAD-dependent monooxygenase family. FAD is required as a cofactor.

It is found in the membrane. It participates in secondary metabolite biosynthesis; terpenoid biosynthesis. In terms of biological role, FAD-dependent monooxygenase; part of the gene cluster A that mediates the biosynthesis of the fungal meroterpenoid acetoxydehydroaustin. The first step of the pathway is the synthesis of 3,5-dimethylorsellinic acid by the polyketide synthase ausA. 3,5-dimethylorsellinic acid is then prenylated by the polyprenyl transferase ausN. Further epoxidation by the FAD-dependent monooxygenase ausM and cyclization by the probable terpene cyclase ausL lead to the formation of protoaustinoid A. Protoaustinoid A is then oxidized to spiro-lactone preaustinoid A3 by the combined action of the FAD-binding monooxygenases ausB and ausC, and the dioxygenase ausE. Acid-catalyzed keto-rearrangement and ring contraction of the tetraketide portion of preaustinoid A3 by ausJ lead to the formation of preaustinoid A4. The aldo-keto reductase ausK, with the help of ausH, is involved in the next step by transforming preaustinoid A4 into isoaustinone which is in turn hydroxylated by the P450 monooxygenase ausI to form austinolide. The cytochrome P450 monooxygenase ausG then modifies austinolide to austinol. Austinol is further acetylated to austin by the O-acetyltransferase ausP, which spontaneously changes to dehydroaustin. The cytochrome P450 monooxygenase then converts dehydroaustin is into 7-dehydrodehydroaustin. The hydroxylation catalyzed by ausR permits the second O-acetyltransferase ausQ to add an additional acetyl group to the molecule, leading to the formation of acetoxydehydroaustin. Due to genetic rearrangements of the clusters and the subsequent loss of some enzymes, the end product of the Penicillium brasilianum austinoid biosynthesis clusters is acetoxydehydroaustin. The chain is FAD-dependent monooxygenase ausM from Penicillium brasilianum.